Consider the following 297-residue polypeptide: Light-independent protochlorophyllide reductase iron-sulfur ATP-binding protein (297 aa).

ATP contacts are provided by residues glycine 41–threonine 46 and lysine 70. Serine 45 serves as a coordination point for Mg(2+). [4Fe-4S] cluster-binding residues include cysteine 126 and cysteine 160. ATP is bound by residues asparagine 211 to arginine 212 and proline 235 to leucine 237.

It belongs to the NifH/BchL/ChlL family. In terms of assembly, homodimer. Protochlorophyllide reductase is composed of three subunits; BchL, BchN and BchB. It depends on [4Fe-4S] cluster as a cofactor.

It carries out the reaction chlorophyllide a + oxidized 2[4Fe-4S]-[ferredoxin] + 2 ADP + 2 phosphate = protochlorophyllide a + reduced 2[4Fe-4S]-[ferredoxin] + 2 ATP + 2 H2O. The protein operates within porphyrin-containing compound metabolism; bacteriochlorophyll biosynthesis (light-independent). In terms of biological role, component of the dark-operative protochlorophyllide reductase (DPOR) that uses Mg-ATP and reduced ferredoxin to reduce ring D of protochlorophyllide (Pchlide) to form chlorophyllide a (Chlide). This reaction is light-independent. The L component serves as a unique electron donor to the NB-component of the complex, and binds Mg-ATP. In Methylorubrum populi (strain ATCC BAA-705 / NCIMB 13946 / BJ001) (Methylobacterium populi), this protein is Light-independent protochlorophyllide reductase iron-sulfur ATP-binding protein.